The following is a 594-amino-acid chain: MLRDTYIGLVDDSFIGKHVKLAGWIDSIRDHGGVLFIDLRDKEGKLQAVLEESGNKELYDIAKHFKEESVVLVEGLVRRRPSGTENPKIKSGNVELLIERIELLNASETLPFPIDDNVDISEELRLKYRYLDLRRPKFQKAIKTRSKALKITRDFFEENGFYEIETPFLIKSTPEGARDFLVPSRLHPGKFYALPQSPQLFKQILMISGFDRYFQIARCFRDEDLRSDRQPEFTQIDFEMSFVEEQDIMEISEKLLSKLFLELLDIELSTPFKRITYKEAMERYGSDKPDTRFGLELVDLSDIFKNTNFNVFKSAIEQKGIIKAIKINKILSRKEIDNLTEYVKGLGAKGLAWGKIENGEFSSPIAKFLTEEEIKAMLSRLEAKDQDMIFFSADKPKNVYKILGNLRLQLGKMLNLIDESKFAFLWVVDFPMFEYNEEEGRLEAMHHPFTSPKTEDLDKIKYIVDKSDKEDIINIGENIGARAYDIVLNGVEIGGGSIRIHKQDIQKLVFKILNITDEEAAMKFGFLLEALKYGAPPHGGLAFGFDRLMAMMLGFDSIRDVIAFPKTQKGTCLLTGAPDVVSDKQLKELHIKIT.

Residue E175 coordinates L-aspartate. The interval Q199 to K202 is aspartate. R221 is a binding site for L-aspartate. ATP is bound by residues R221 to E223 and Q230. H446 contributes to the L-aspartate binding site. E492 is a binding site for ATP. R499 lines the L-aspartate pocket. Residue G544–R547 coordinates ATP.

This sequence belongs to the class-II aminoacyl-tRNA synthetase family. Type 1 subfamily. Homodimer.

It is found in the cytoplasm. The enzyme catalyses tRNA(Asx) + L-aspartate + ATP = L-aspartyl-tRNA(Asx) + AMP + diphosphate. Aspartyl-tRNA synthetase with relaxed tRNA specificity since it is able to aspartylate not only its cognate tRNA(Asp) but also tRNA(Asn). Reaction proceeds in two steps: L-aspartate is first activated by ATP to form Asp-AMP and then transferred to the acceptor end of tRNA(Asp/Asn). The polypeptide is Aspartate--tRNA(Asp/Asn) ligase (Hydrogenobaculum sp. (strain Y04AAS1)).